Here is a 173-residue protein sequence, read N- to C-terminus: Superoxide dismutase [Cu-Zn] (173 aa).

Positions 1–19 (MKSLFIASTMVLMAFPAFA) are cleaved as a signal peptide. Residues H67, H69, and H92 each coordinate Cu cation. A disulfide bridge links C74 with C169. Positions 92, 101, 109, and 112 each coordinate Zn(2+). Residue H147 coordinates Cu cation.

The protein belongs to the Cu-Zn superoxide dismutase family. In terms of assembly, homodimer. Cu cation serves as cofactor. Requires Zn(2+) as cofactor.

Its subcellular location is the periplasm. The enzyme catalyses 2 superoxide + 2 H(+) = H2O2 + O2. Its function is as follows. Destroys radicals which are normally produced within the cells and which are toxic to biological systems. This is Superoxide dismutase [Cu-Zn] (sodC) from Brucella abortus biovar 1 (strain 9-941).